The primary structure comprises 182 residues: Heat shock protein beta-2 (182 aa).

In terms of domain architecture, sHSP spans 55–163 (RAGEGGRAGA…DTEVNEVYIS (109 aa)).

This sequence belongs to the small heat shock protein (HSP20) family. As to quaternary structure, interacts with DMPK; may enhance its kinase activity.

Its subcellular location is the cytoplasm. The protein resides in the nucleus. Functionally, may regulate the kinase DMPK. This Rattus norvegicus (Rat) protein is Heat shock protein beta-2 (Hspb2).